The primary structure comprises 264 residues: Zinc import ATP-binding protein ZnuC (264 aa).

In terms of domain architecture, ABC transporter spans 11–226 (IELQNIKVVF…PTFIHLFGDQ (216 aa)). 43 to 50 (GPNGGGKS) is an ATP binding site.

Belongs to the ABC transporter superfamily. Zinc importer (TC 3.A.1.15.5) family. The complex is composed of two ATP-binding proteins (ZnuC), two transmembrane proteins (ZnuB) and a solute-binding protein (ZnuA).

It is found in the cell inner membrane. It catalyses the reaction Zn(2+)(out) + ATP(in) + H2O(in) = Zn(2+)(in) + ADP(in) + phosphate(in) + H(+)(in). Its function is as follows. Part of the ABC transporter complex ZnuABC involved in zinc import. Responsible for energy coupling to the transport system. The polypeptide is Zinc import ATP-binding protein ZnuC (Mannheimia succiniciproducens (strain KCTC 0769BP / MBEL55E)).